The sequence spans 225 residues: Urease subunit alpha (225 aa).

The tract at residues 1-102 is urease gamma; it reads MRLTPKELDK…LVTIHNPIED (102 aa). Residues 103–225 are urease beta; that stretch reads NGKLTPGEYI…ANAAQKHFIH (123 aa).

In the N-terminal section; belongs to the urease gamma subunit family. This sequence in the C-terminal section; belongs to the urease beta subunit family. Heterohexamer of 3 UreA (alpha) and 3 UreB (beta) subunits.

It localises to the cytoplasm. It catalyses the reaction urea + 2 H2O + H(+) = hydrogencarbonate + 2 NH4(+). The protein operates within nitrogen metabolism; urea degradation; CO(2) and NH(3) from urea (urease route): step 1/1. The chain is Urease subunit alpha from Helicobacter hepaticus (strain ATCC 51449 / 3B1).